The following is a 217-amino-acid chain: LexA repressor (217 aa).

The segment at residues 28–48 is a DNA-binding region (H-T-H motif); the sequence is RAEIAAEFGFSSPNAAEEHLR. Catalysis depends on for autocatalytic cleavage activity residues Ser136 and Lys173.

This sequence belongs to the peptidase S24 family. As to quaternary structure, homodimer.

It catalyses the reaction Hydrolysis of Ala-|-Gly bond in repressor LexA.. Functionally, represses a number of genes involved in the response to DNA damage (SOS response), including recA and lexA. In the presence of single-stranded DNA, RecA interacts with LexA causing an autocatalytic cleavage which disrupts the DNA-binding part of LexA, leading to derepression of the SOS regulon and eventually DNA repair. The protein is LexA repressor of Cupriavidus necator (strain ATCC 17699 / DSM 428 / KCTC 22496 / NCIMB 10442 / H16 / Stanier 337) (Ralstonia eutropha).